A 177-amino-acid chain; its full sequence is Ribosome maturation factor RimP (177 aa).

Over residues 153 to 171 (VEFNRKDTKNDNQTEHDNK) the composition is skewed to basic and acidic residues. The interval 153-177 (VEFNRKDTKNDNQTEHDNKTEEEEA) is disordered.

It belongs to the RimP family.

The protein localises to the cytoplasm. Required for maturation of 30S ribosomal subunits. In Streptomyces coelicolor (strain ATCC BAA-471 / A3(2) / M145), this protein is Ribosome maturation factor RimP.